The chain runs to 157 residues: Transcription elongation factor GreB (157 aa).

The protein belongs to the GreA/GreB family. GreB subfamily.

Necessary for efficient RNA polymerase transcription elongation past template-encoded arresting sites. The arresting sites in DNA have the property of trapping a certain fraction of elongating RNA polymerases that pass through, resulting in locked ternary complexes. Cleavage of the nascent transcript by cleavage factors such as GreA or GreB allows the resumption of elongation from the new 3'terminus. GreB releases sequences of up to 9 nucleotides in length. The chain is Transcription elongation factor GreB from Salmonella typhi.